Reading from the N-terminus, the 463-residue chain is Argininosuccinate lyase (463 aa).

The protein belongs to the lyase 1 family. Argininosuccinate lyase subfamily.

Its subcellular location is the cytoplasm. It catalyses the reaction 2-(N(omega)-L-arginino)succinate = fumarate + L-arginine. It participates in amino-acid biosynthesis; L-arginine biosynthesis; L-arginine from L-ornithine and carbamoyl phosphate: step 3/3. The polypeptide is Argininosuccinate lyase (Ruegeria pomeroyi (strain ATCC 700808 / DSM 15171 / DSS-3) (Silicibacter pomeroyi)).